Reading from the N-terminus, the 397-residue chain is Elongation factor Tu (397 aa).

One can recognise a tr-type G domain in the interval 10 to 206; that stretch reads KPHVNIGTIG…AVDEYIPTPE (197 aa). The tract at residues 19–26 is G1; it reads GHVDHGKT. 19-26 is a GTP binding site; the sequence is GHVDHGKT. Residue Thr-26 participates in Mg(2+) binding. The G2 stretch occupies residues 60–64; it reads GITIS. Positions 81–84 are G3; that stretch reads DCPG. GTP is bound by residues 81-85 and 136-139; these read DCPGH and NKAD. The G4 stretch occupies residues 136-139; the sequence is NKAD. The interval 174-176 is G5; that stretch reads SAL.

It belongs to the TRAFAC class translation factor GTPase superfamily. Classic translation factor GTPase family. EF-Tu/EF-1A subfamily. As to quaternary structure, monomer.

Its subcellular location is the cytoplasm. It catalyses the reaction GTP + H2O = GDP + phosphate + H(+). In terms of biological role, GTP hydrolase that promotes the GTP-dependent binding of aminoacyl-tRNA to the A-site of ribosomes during protein biosynthesis. In Clostridium tetani (strain Massachusetts / E88), this protein is Elongation factor Tu.